The sequence spans 78 residues: Acyl carrier protein (78 aa).

One can recognise a Carrier domain in the interval 2 to 77; sequence SDIAERVKKI…DAIKFLEKNA (76 aa). Serine 37 carries the O-(pantetheine 4'-phosphoryl)serine modification.

Belongs to the acyl carrier protein (ACP) family. 4'-phosphopantetheine is transferred from CoA to a specific serine of apo-ACP by AcpS. This modification is essential for activity because fatty acids are bound in thioester linkage to the sulfhydryl of the prosthetic group.

The protein localises to the cytoplasm. It participates in lipid metabolism; fatty acid biosynthesis. Functionally, carrier of the growing fatty acid chain in fatty acid biosynthesis. In Azorhizobium caulinodans (strain ATCC 43989 / DSM 5975 / JCM 20966 / LMG 6465 / NBRC 14845 / NCIMB 13405 / ORS 571), this protein is Acyl carrier protein.